Reading from the N-terminus, the 179-residue chain is Peptidyl-tRNA hydrolase (179 aa).

Tyrosine 14 provides a ligand contact to tRNA. Histidine 19 acts as the Proton acceptor in catalysis. Residues tyrosine 61, asparagine 63, and asparagine 107 each contribute to the tRNA site.

It belongs to the PTH family. Monomer.

It is found in the cytoplasm. It catalyses the reaction an N-acyl-L-alpha-aminoacyl-tRNA + H2O = an N-acyl-L-amino acid + a tRNA + H(+). Functionally, hydrolyzes ribosome-free peptidyl-tRNAs (with 1 or more amino acids incorporated), which drop off the ribosome during protein synthesis, or as a result of ribosome stalling. In terms of biological role, catalyzes the release of premature peptidyl moieties from peptidyl-tRNA molecules trapped in stalled 50S ribosomal subunits, and thus maintains levels of free tRNAs and 50S ribosomes. In Campylobacter lari (strain RM2100 / D67 / ATCC BAA-1060), this protein is Peptidyl-tRNA hydrolase.